The chain runs to 56 residues: MPLTDPAKLQIVQQRVFLKKVCRKCGALNPIRATKCRRCHSTNLRLKKKELPTKKG.

It belongs to the eukaryotic ribosomal protein eL40 family.

In Saccharolobus islandicus (strain Y.N.15.51 / Yellowstone #2) (Sulfolobus islandicus), this protein is Large ribosomal subunit protein eL40.